We begin with the raw amino-acid sequence, 449 residues long: Mycosin-1 (449 aa).

A signal peptide spans 1-23 (MQRVAVMVLAVLLALFSAPPAWA). C51 and C120 are oxidised to a cystine. The region spanning 66–389 (PWANDYLRIQ…AGVIDPVAAL (324 aa)) is the Peptidase S8 domain. Residues D92 and H123 each act as charge relay system in the active site. Disordered stretches follow at residues 160–179 (FQPKGARQDPNDPNTTQTAG) and 240–259 (TGQDCSQNPPPDPSVPSDPR). The span at 170-179 (NDPNTTQTAG) shows a compositional bias: polar residues. A disulfide bridge links C206 with C244. S334 serves as the catalytic Charge relay system. Residues 421–441 (ITAVVIAGATLAFALGIGALA) traverse the membrane as a helical segment.

Belongs to the peptidase S8 family.

It is found in the cell membrane. Its function is as follows. May play a dual role in regulation of ESX-1 secretion and virulence. Acts as a protease that cleaves EspB. In Mycolicibacterium smegmatis (strain ATCC 700084 / mc(2)155) (Mycobacterium smegmatis), this protein is Mycosin-1.